We begin with the raw amino-acid sequence, 613 residues long: Leucine aminopeptidase 2 (613 aa).

A peptide is bound by residues 134-136 (QAQ) and 265-270 (PYGGME). Histidine 294 is a Zn(2+) binding site. The Proton acceptor role is filled by glutamate 295. Residues histidine 298 and glutamate 317 each contribute to the Zn(2+) site. Tyrosine 382 serves as the catalytic Proton donor.

This sequence belongs to the peptidase M1 family. It depends on Zn(2+) as a cofactor.

The protein localises to the cytoplasm. The protein resides in the nucleus. The catalysed reaction is an epoxide + H2O = an ethanediol. Aminopeptidase that preferentially cleaves di- and tripeptides. Also has low epoxide hydrolase activity (in vitro). Can hydrolyze the epoxide leukotriene LTA(4) but it forms preferentially 5,6-dihydroxy-7,9,11,14-eicosatetraenoic acid rather than the cytokine leukotriene B(4) as the product compared to the homologous mammalian enzyme (in vitro). The chain is Leucine aminopeptidase 2 from Pyricularia oryzae (strain 70-15 / ATCC MYA-4617 / FGSC 8958) (Rice blast fungus).